Reading from the N-terminus, the 1423-residue chain is Protein Shroom2 (1423 aa).

The interval 1–101 is disordered; sequence MRPSTVTSRI…PDHTLPKADA (101 aa). Residues 8–27 show a composition bias toward low complexity; sequence SRIWWSESSSSSSHDLSGSW. Polar residues-rich tracts occupy residues 28 to 69 and 83 to 93; these read EHTS…NSSI and GSFSTCSSTPD. Position 103 is a phosphoserine (Ser103). The interval 116–171 is disordered; it reads ASRPGSSRQSQSTGDPQGLQDRPSSFLPRVPGNSSKSPRPEDNIEPKIATSGRSNF. Positions 119 to 130 are enriched in polar residues; sequence PGSSRQSQSTGD. 3 positions are modified to phosphoserine: Ser185, Ser197, and Ser291. 5 disordered regions span residues 300–357, 586–630, 758–855, 872–930, and 1045–1085; these read SYHG…VNQK, TSFQ…SAPR, EILS…SGGQ, PSSS…KLTD, and VETP…KEKT. Positions 575–677 constitute an ASD1 domain; the sequence is LKEAQTRVLK…SEPEKINEVG (103 aa). Basic and acidic residues predominate over residues 761-771; that stretch reads SEDRKVEKASE. A phosphoserine mark is found at Ser806, Ser830, Ser831, and Ser833. Thr834 carries the post-translational modification Phosphothreonine. The segment covering 872-885 has biased composition (low complexity); it reads PSSSVLSSAQPQDS. A compositionally biased stretch (polar residues) spans 891 to 923; that stretch reads DPTSPQPEAQLSSKCQHLQTSTMETSRSPSPQF. A phosphoserine mark is found at Ser918 and Ser920. Over residues 1054 to 1065 the composition is skewed to pro residues; it reads PEPQPPSTPAPP. A phosphoserine mark is found at Ser1072 and Ser1329. The region spanning 1092–1418 is the ASD2 domain; the sequence is EELAREIVGK…QLKCLFDSLQ (327 aa).

The protein belongs to the shroom family. As to quaternary structure, interacts with F-actin.

It is found in the apical cell membrane. It localises to the cell junction. Its subcellular location is the tight junction. The protein resides in the cytoplasm. The protein localises to the cytoskeleton. In terms of biological role, may be involved in endothelial cell morphology changes during cell spreading. In the retinal pigment epithelium, may regulate the biogenesis of melanosomes and promote their association with the apical cell surface by inducing gamma-tubulin redistribution. The protein is Protein Shroom2 (Shroom2) of Rattus norvegicus (Rat).